The primary structure comprises 304 residues: Putative HTH-type transcriptional regulatory protein Memar_2347 (304 aa).

In terms of domain architecture, HTH cro/C1-type spans L132–L189. The segment at residues L143–S162 is a DNA-binding region (H-T-H motif).

In Methanoculleus marisnigri (strain ATCC 35101 / DSM 1498 / JR1), this protein is Putative HTH-type transcriptional regulatory protein Memar_2347.